The following is a 323-amino-acid chain: 4-hydroxyphenylpyruvate 3-dimethylallyltransferase (323 aa).

Residues Arg160 and Glu281 each contribute to the substrate site.

This sequence belongs to the aromatic prenyltransferase family. Monomer.

It localises to the cytoplasm. It carries out the reaction 3-(4-hydroxyphenyl)pyruvate + dimethylallyl diphosphate = 3-dimethylallyl-4-hydroxyphenylpyruvate + diphosphate. It participates in antibiotic biosynthesis; novobiocin biosynthesis. Its function is as follows. Magnesium-independent aromatic prenyltransferase that catalyzes the irreversible transfer of a dimethylallyl group to 4-hydroxyphenylpyruvate to produce the ring A structure in the novobiocin biosynthesis pathway. Novobiocin is an aminocoumarin family antibiotic that targets bacterial DNA gyrases. It is able to prenylate many different compounds, including the phenylpropanoids 4-coumarate and caffeate, the plant polyketide resveratrol, the (iso)flavonoid naringenin, apigenin, daidzein and genistein, and the dihydroxynaphthalenes 1,6-DHN and 2,7-DHN. In Streptomyces niveus (Streptomyces spheroides), this protein is 4-hydroxyphenylpyruvate 3-dimethylallyltransferase.